The primary structure comprises 194 residues: tRNA (guanine-N(1)-)-methyltransferase (194 aa).

S-adenosyl-L-methionine contacts are provided by residues glycine 78 and 97–102 (IGDYVL).

It belongs to the RNA methyltransferase TrmD family. As to quaternary structure, homodimer.

The protein resides in the cytoplasm. The enzyme catalyses guanosine(37) in tRNA + S-adenosyl-L-methionine = N(1)-methylguanosine(37) in tRNA + S-adenosyl-L-homocysteine + H(+). Functionally, specifically methylates guanosine-37 in various tRNAs. The polypeptide is tRNA (guanine-N(1)-)-methyltransferase (Mycoplasma mobile (strain ATCC 43663 / 163K / NCTC 11711) (Mesomycoplasma mobile)).